The following is a 148-amino-acid chain: Leghemoglobin 2 (148 aa).

Residues 2-148 (GFTEKQEALV…LSAAIKKAMS (147 aa)) enclose the Globin domain. Tyr30 bears the Nitrated tyrosine mark. Heme b is bound at residue Ser45. The residue at position 45 (Ser45) is a Phosphoserine. Residue His63 participates in O2 binding. Residues Lys66, His95, and Lys98 each coordinate heme b. At Tyr136 the chain carries Nitrated tyrosine.

It belongs to the plant globin family. As to quaternary structure, monomer. Post-translationally, nitrated in effective nodules and particularly in hypoxic conditions; this mechanism may play a protective role in the symbiosis by buffering toxic peroxynitrite NO(2)(-). Nitration level decrease during nodule senescence. Phosphorylation at Ser-45 disrupts the molecular environment of its porphyrin ring oxygen binding pocket, thus leading to a reduced oxygen consumption and to the delivery of oxygen O(2) to symbiosomes. In terms of tissue distribution, stem nodules.

Its subcellular location is the cytoplasm. The protein resides in the cytosol. The protein localises to the nucleus. Functionally, leghemoglobin that reversibly binds oxygen O(2) through a pentacoordinated heme iron. In stem nodules, facilitates the diffusion of oxygen to the bacteroids while preventing the bacterial nitrogenase from being inactivated by buffering dioxygen, nitric oxide and carbon monoxide, and promoting the formation of reactive oxygen species (ROS, e.g. H(2)O(2)). This role is essential for symbiotic nitrogen fixation (SNF). The protein is Leghemoglobin 2 of Sesbania rostrata.